The following is a 471-amino-acid chain: tRNA-2-methylthio-N(6)-dimethylallyladenosine synthase (471 aa).

The MTTase N-terminal domain occupies 31-149 (LYYHIETYGC…FPQLLWEALN (119 aa)). [4Fe-4S] cluster is bound by residues Cys-40, Cys-76, Cys-110, Cys-186, Cys-190, and Cys-193. One can recognise a Radical SAM core domain in the interval 172-402 (RDSNLKAWVN…IELQNKISLE (231 aa)). The TRAM domain maps to 405–468 (AELRGKIVEV…AWTMQGELVE (64 aa)).

Belongs to the methylthiotransferase family. MiaB subfamily. Monomer. Requires [4Fe-4S] cluster as cofactor.

The protein localises to the cytoplasm. It catalyses the reaction N(6)-dimethylallyladenosine(37) in tRNA + (sulfur carrier)-SH + AH2 + 2 S-adenosyl-L-methionine = 2-methylsulfanyl-N(6)-dimethylallyladenosine(37) in tRNA + (sulfur carrier)-H + 5'-deoxyadenosine + L-methionine + A + S-adenosyl-L-homocysteine + 2 H(+). Catalyzes the methylthiolation of N6-(dimethylallyl)adenosine (i(6)A), leading to the formation of 2-methylthio-N6-(dimethylallyl)adenosine (ms(2)i(6)A) at position 37 in tRNAs that read codons beginning with uridine. The polypeptide is tRNA-2-methylthio-N(6)-dimethylallyladenosine synthase (Thermoanaerobacter pseudethanolicus (strain ATCC 33223 / 39E) (Clostridium thermohydrosulfuricum)).